A 124-amino-acid chain; its full sequence is Putative peptidyl-tRNA hydrolase (124 aa).

The protein belongs to the PTH2 family.

It catalyses the reaction an N-acyl-L-alpha-aminoacyl-tRNA + H2O = an N-acyl-L-amino acid + a tRNA + H(+). The chain is Putative peptidyl-tRNA hydrolase from Fowlpox virus (strain NVSL) (FPV).